The primary structure comprises 734 residues: Serine protease FAM111B (734 aa).

An N-acetylmethionine modification is found at Met1. Composition is skewed to basic and acidic residues over residues 1–10 (MNSMKTEENK) and 17–32 (DDQR…TVMK). The tract at residues 1 to 32 (MNSMKTEENKSFSAMEDDQRTRPEVSKDTVMK) is disordered. A Glycyl lysine isopeptide (Lys-Gly) (interchain with G-Cter in SUMO2) cross-link involves residue Lys284. The tract at residues 285-321 (QNESATDEINHQSLIQSKKKVHKPKKDGETKDVEHSR) is disordered. Residues 310 to 321 (KDGETKDVEHSR) show a composition bias toward basic and acidic residues. Residues His490, Asp544, and Ser650 each act as charge relay system in the active site. Residues 712-734 (TYDEEKGKQESSLQDHQIEPMEC) form a disordered region.

It belongs to the FAM111 family. As to expression, widely expressed.

Functionally, serine protease. This is Serine protease FAM111B from Homo sapiens (Human).